Consider the following 61-residue polypeptide: Small ribosomal subunit protein uS14 (61 aa).

Zn(2+) is bound by residues C24, C27, C40, and C43.

Belongs to the universal ribosomal protein uS14 family. Zinc-binding uS14 subfamily. In terms of assembly, part of the 30S ribosomal subunit. Contacts proteins S3 and S10. Requires Zn(2+) as cofactor.

Functionally, binds 16S rRNA, required for the assembly of 30S particles and may also be responsible for determining the conformation of the 16S rRNA at the A site. This is Small ribosomal subunit protein uS14 from Borrelia hermsii (strain HS1 / DAH).